A 579-amino-acid polypeptide reads, in one-letter code: Proteasome-associated ATPase (579 aa).

Residues 1–21 are disordered; it reads MPRDETPEREHAEQQSRQALE. Positions 8–86 form a coiled coil; the sequence is EREHAEQQSR…REEVEKLTQP (79 aa). ATP is bound at residue 268-273; that stretch reads GCGKTL. The tract at residues 578 to 579 is docks into pockets in the proteasome alpha-ring; that stretch reads YL.

Belongs to the AAA ATPase family. In terms of assembly, homohexamer. Assembles into a hexameric ring structure that caps the 20S proteasome core. Strongly interacts with the prokaryotic ubiquitin-like protein Pup through a hydrophobic interface; the interacting region of ARC lies in its N-terminal coiled-coil domain. There is one Pup binding site per ARC hexamer ring. Upon ATP-binding, the C-terminus of ARC interacts with the alpha-rings of the proteasome core, possibly by binding to the intersubunit pockets.

It functions in the pathway protein degradation; proteasomal Pup-dependent pathway. In terms of biological role, ATPase which is responsible for recognizing, binding, unfolding and translocation of pupylated proteins into the bacterial 20S proteasome core particle. May be essential for opening the gate of the 20S proteasome via an interaction with its C-terminus, thereby allowing substrate entry and access to the site of proteolysis. Thus, the C-termini of the proteasomal ATPase may function like a 'key in a lock' to induce gate opening and therefore regulate proteolysis. This is Proteasome-associated ATPase from Acidimicrobium ferrooxidans (strain DSM 10331 / JCM 15462 / NBRC 103882 / ICP).